Consider the following 373-residue polypeptide: MEISYYEILEITQNADKETIKKAYRKMALKYHPDRNQGDKEAEDKFKLVNEAYEVLSNDEKRAIYDRYGKDALKGGGFGSSSSGFGGFEDLGDIFSSFFGEGFGSSRRRKSSNDEKIPSDFIVNLKLSFKEAVFGCKKNIDFTYKCSCKTCNGTGAKDGKLQTCPKCQGRGQVGVSQGFITFAQTCPDCQGIGEKASEKCSDCKGLGYNESKDSVELNIPEGVDTGMKLRVNAKGNILKNGTRGDMYVKIIAAEDDTFIRDDDDIYIEFPVFFTQAILGESIKVPTIRGEATLNLPKGAKDGQRFVLEKEGVKDVHSSRMGNQIVQISIKFPTSLNDEQKELLEKLSESFGIKDGMHQEQKGLFEKITNWFKS.

The 66-residue stretch at Ser-4–Gly-69 folds into the J domain. The CR-type zinc-finger motif lies at Gly-135–Lys-212. The Zn(2+) site is built by Cys-148, Cys-151, Cys-164, Cys-167, Cys-186, Cys-189, Cys-200, and Cys-203. CXXCXGXG motif repeat units lie at residues Cys-148–Gly-155, Cys-164–Gly-171, Cys-186–Gly-193, and Cys-200–Gly-207.

It belongs to the DnaJ family. As to quaternary structure, homodimer. Zn(2+) is required as a cofactor.

The protein resides in the cytoplasm. Functionally, participates actively in the response to hyperosmotic and heat shock by preventing the aggregation of stress-denatured proteins and by disaggregating proteins, also in an autonomous, DnaK-independent fashion. Unfolded proteins bind initially to DnaJ; upon interaction with the DnaJ-bound protein, DnaK hydrolyzes its bound ATP, resulting in the formation of a stable complex. GrpE releases ADP from DnaK; ATP binding to DnaK triggers the release of the substrate protein, thus completing the reaction cycle. Several rounds of ATP-dependent interactions between DnaJ, DnaK and GrpE are required for fully efficient folding. Also involved, together with DnaK and GrpE, in the DNA replication of plasmids through activation of initiation proteins. This Campylobacter jejuni subsp. jejuni serotype O:2 (strain ATCC 700819 / NCTC 11168) protein is Chaperone protein DnaJ.